A 59-amino-acid polypeptide reads, in one-letter code: Small ribosomal subunit protein bS21 (59 aa).

Positions 36-59 (EHYEKPSVKRKKKAEAAKRNKSKF) are disordered. Residues 43-59 (VKRKKKAEAAKRNKSKF) show a composition bias toward basic residues.

Belongs to the bacterial ribosomal protein bS21 family.

The chain is Small ribosomal subunit protein bS21 from Alkaliphilus oremlandii (strain OhILAs) (Clostridium oremlandii (strain OhILAs)).